The sequence spans 117 residues: Immunoglobulin kappa variable 1-16 (117 aa).

The N-terminal stretch at 1–22 (MDMRVLAQLLGLLLLCFPGARC) is a signal peptide. A framework-1 region spans residues 23–45 (DIQMTQSPSSLSASVGDRVTITC). One can recognise an Ig-like domain in the interval 24-117 (IQMTQSPSSL…YYCQQYNSYP (94 aa)). C45 and C110 are oxidised to a cystine. A complementarity-determining-1 region spans residues 46-56 (RASQGISNYLA). A framework-2 region spans residues 57 to 71 (WFQQKPGKAPKSLIY). A complementarity-determining-2 region spans residues 72–78 (AASSLQS). The tract at residues 79–110 (GVPSKFSGSGSGTDFTLTISSLQPEDFATYYC) is framework-3. The tract at residues 111 to 117 (QQYNSYP) is complementarity-determining-3.

Immunoglobulins are composed of two identical heavy chains and two identical light chains; disulfide-linked.

Its subcellular location is the secreted. The protein localises to the cell membrane. Its function is as follows. V region of the variable domain of immunoglobulin light chains that participates in the antigen recognition. Immunoglobulins, also known as antibodies, are membrane-bound or secreted glycoproteins produced by B lymphocytes. In the recognition phase of humoral immunity, the membrane-bound immunoglobulins serve as receptors which, upon binding of a specific antigen, trigger the clonal expansion and differentiation of B lymphocytes into immunoglobulins-secreting plasma cells. Secreted immunoglobulins mediate the effector phase of humoral immunity, which results in the elimination of bound antigens. The antigen binding site is formed by the variable domain of one heavy chain, together with that of its associated light chain. Thus, each immunoglobulin has two antigen binding sites with remarkable affinity for a particular antigen. The variable domains are assembled by a process called V-(D)-J rearrangement and can then be subjected to somatic hypermutations which, after exposure to antigen and selection, allow affinity maturation for a particular antigen. The chain is Immunoglobulin kappa variable 1-16 from Homo sapiens (Human).